Reading from the N-terminus, the 324-residue chain is Homoserine kinase (324 aa).

87-97 (PVARGMGSSAA) is an ATP binding site.

Belongs to the GHMP kinase family. Homoserine kinase subfamily.

The protein localises to the cytoplasm. It carries out the reaction L-homoserine + ATP = O-phospho-L-homoserine + ADP + H(+). It functions in the pathway amino-acid biosynthesis; L-threonine biosynthesis; L-threonine from L-aspartate: step 4/5. Its function is as follows. Catalyzes the ATP-dependent phosphorylation of L-homoserine to L-homoserine phosphate. This chain is Homoserine kinase, found in Symbiobacterium thermophilum (strain DSM 24528 / JCM 14929 / IAM 14863 / T).